A 4691-amino-acid chain; its full sequence is Plectin (4691 aa).

Residues 1-1478 (MVAGMLMPLD…SELTTLTSQY (1478 aa)) are globular 1. Arg21 carries the phosphoserine modification. Residue Val26 is modified to Phosphotyrosine. 2 disordered regions span residues 113–161 (RSPH…TPVV) and 167–186 (GTLA…RDRV). The span at 137 to 154 (DPAREERQVYRRKEREEG) shows a compositional bias: basic and acidic residues. The tract at residues 181–411 (DERDRVQKKT…YVSSLYDAMP (231 aa)) is actin-binding. 2 Calponin-homology (CH) domains span residues 185 to 293 (RVQK…LHFQ) and 306 to 411 (MTAK…DAMP). A Spectrin 1 repeat occupies 653–727 (LQSTQRRPEL…ERARNDESQL (75 aa)). Residue Ser728 is modified to Phosphoserine. Spectrin repeat units follow at residues 748–832 (KLLN…REDH) and 845–938 (LQTQ…AIVQ). The residue at position 823 (Thr823) is a Phosphothreonine. The 58-residue stretch at 949–1006 (RGHVPLIAVCDYKQVEVTVHKGDQCQLVGPAQPSHWKVLSGSSSEAAVPSVCFLVPPP) folds into the SH3 domain. Positions 963 to 4572 (VEVTVHKGDQ…ARTAQKLRDV (3610 aa)) are required for interaction with intermediate filament proteins. Ser1055 is modified (phosphoserine). A Spectrin 4 repeat occupies 1323–1423 (RERVTQLLER…QKFAKQYINA (101 aa)). The residue at position 1443 (Ser1443) is a Phosphoserine. Coiled-coil stretches lie at residues 1477 to 1697 (QYIK…ERRL) and 1729 to 2764 (SFAE…TTQA). The segment at 1479–2762 (IKFISETLRR…ALAHSEIATT (1284 aa)) is central fibrous rod domain. The interval 1626-1653 (RAEEAEAQKRQAQEEAERLRRQVQDESQ) is disordered. Ser1729 is subject to Phosphoserine. Lys1733 carries the post-translational modification N6-acetyllysine. Disordered regions lie at residues 1801–1835 (SLAQ…RELA), 2100–2141 (AEDT…SLAA), and 2223–2317 (RLRS…KHKK). Basic and acidic residues-rich tracts occupy residues 1806 to 1835 (DAEK…RELA), 2100 to 2116 (AEDT…EAAR), 2124 to 2136 (EEQR…ERVQ), and 2223 to 2266 (RLRS…KQSA). Low complexity predominate over residues 2267-2280 (EEQAQAQAQAQAAA). The segment covering 2281–2296 (EKLRKEAEQEAARRAQ) has biased composition (basic and acidic residues). The residue at position 2639 (Ser2639) is a Phosphoserine. An N6-acetyllysine modification is found at Lys2644. Residues 2675 to 2728 (LREEQQRQQQQMEQEKQELMASMEEARRRQREAEEGVRRKQEELQHLEQQRQQQ) form a disordered region. Residues 2687–2728 (EQEKQELMASMEEARRRQREAEEGVRRKQEELQHLEQQRQQQ) show a composition bias toward basic and acidic residues. Residues 2763–4691 (QAASTKALPN…SLGGPESAVA (1929 aa)) are globular 2. The residue at position 2781 (Ser2781) is a Phosphoserine. Tyr2788 carries the phosphotyrosine modification. Plectin repeat units lie at residues 2795–2832 (QKVP…REDV), 2833–2870 (YRYL…PGTA), 2871–2908 (LILL…PELH), 2909–2946 (HKLL…RDHG), 2947–2984 (VRLL…EEMN), and 2988–3022 (SDPS…PETG). Residue Ser2809 is modified to Phosphoserine. Residue Thr2893 is modified to Phosphothreonine. Phosphotyrosine is present on Tyr3040. An N6-acetyllysine mark is found at Lys3060 and Lys3098. Plectin repeat units lie at residues 3123-3160 (ALVP…ADSV), 3161-3198 (RQAL…PEVA), 3199-3236 (VALL…PELH), 3237-3274 (EKLL…REQG), 3275-3312 (LRLL…KETN), and 3315-3350 (LTSP…QLTG). Over residues 3312-3326 (NRALTSPRDDARVYH) the composition is skewed to basic and acidic residues. The tract at residues 3312–3338 (NRALTSPRDDARVYHDPSTQEPVTYSQ) is disordered. Residues 3328–3338 (PSTQEPVTYSQ) show a composition bias toward polar residues. Residue Tyr3369 is modified to Phosphotyrosine. N6-acetyllysine is present on Lys3427. Plectin repeat units lie at residues 3492-3529 (RTLL…PSTA), 3530-3567 (TLLL…PELH), 3568-3605 (EKLL…RDHA), 3606-3643 (IRLL…EEMN), and 3647-3681 (ADPS…PETG). Thr3792 is subject to Phosphothreonine. Residue Tyr3797 is modified to Phosphotyrosine. 5 Plectin repeats span residues 3827 to 3864 (WRYL…AEVA), 3865 to 3902 (RLLL…PELH), 3903 to 3940 (DRLL…AEEA), 3941 to 3978 (LRLL…KDTH), and 3982 to 4015 (SEPS…DPSG). The segment at 3954-4291 (VDPRLGFHLP…KRRVVIVDPE (338 aa)) is required for interaction with type2 keratins, DES and VIM. Thr4037 carries the post-translational modification Phosphothreonine. Ser4061 is modified (phosphoserine). Plectin repeat units lie at residues 4070 to 4107 (QKFL…PGTA), 4108 to 4145 (FELL…PEFK), 4146 to 4183 (DKLL…KDHG), 4184 to 4221 (IRLL…EEMN), 4225 to 4259 (TDPS…PQTG), and 4272 to 4312 (RKTS…HQTY). The segment at 4257–4307 (QTGLCLLPLKEKKRERKTSSKSSVRKRRVVIVDPETGKEMSVYEAYRKGLI) is binding to intermediate filaments. The tract at residues 4387–4420 (FRSRSSSVGSSSSYPISSAGPRTQLASWSDPTEE) is disordered. A phosphoserine mark is found at Ser4389, Ser4391, Ser4392, Ser4393, Ser4396, Ser4397, Ser4398, and Ser4399. Residues 4389-4404 (SRSSSVGSSSSYPISS) show a composition bias toward low complexity. Tyr4400 is modified (phosphotyrosine). 2 positions are modified to phosphoserine: Ser4403 and Ser4413. The span at 4406 to 4416 (GPRTQLASWSD) shows a compositional bias: polar residues. Plectin repeat units follow at residues 4415-4452 (SDPT…NITG), 4453-4490 (QRLL…KIMV), 4491-4528 (DRIN…YEAG), 4529-4566 (QRFL…ARTA), and 4567-4604 (QKLR…EGTG). At Thr4418 the chain carries Phosphothreonine. A required for efficient interaction with KRT5 and KRT14 heterodimers region spans residues 4503–4572 (FEDPRTKTKM…ARTAQKLRDV (70 aa)). Thr4546 bears the Phosphothreonine; by CDK1 mark. Phosphoserine occurs at positions 4614 and 4620. Positions 4618–4678 (YYSPYSVSGS…SGYGRRYASG (61 aa)) are enriched in low complexity. The tract at residues 4618–4691 (YYSPYSVSGS…SLGGPESAVA (74 aa)) is disordered. Phosphotyrosine is present on Tyr4622. Residues Ser4623, Ser4625, and Ser4629 each carry the phosphoserine modification. A Phosphothreonine modification is found at Thr4630. Positions 4632–4647 (GSRTGSRTGSRAGSRR) are 4 X 4 AA tandem repeats of G-S-R-X. A Phosphoserine modification is found at Ser4633. Residues Arg4634 and Arg4647 each carry the omega-N-methylarginine modification. Ser4649 and Ser4682 each carry phosphoserine.

This sequence belongs to the plakin or cytolinker family. Homodimer or homotetramer. Interacts (via actin-binding domain) with SYNE3. Interacts (via calponin-homology (CH) 1 domain) with VIM (via rod region). Interacts (via N-terminus) with DST isoform 2 (via N-terminus). Interacts with FER. Interacts with TOR1A. Interacts with ANK3. Identified in complexes that contain VIM, EZR, AHNAK, BFSP1, BFSP2, ANK2, PLEC, PRX and spectrin. As to quaternary structure, interacts with KRT14, heterodimers consisting of KRT8 and KRT18, heterodimers consisting of KRT5 and KRT14, heterodimers consisting of KRT14 and KRT15, and heterodimers consisting of KRT1 and KRT10. Interacts with DES and VIM. Phosphorylated by CDK1; regulates dissociation from intermediate filaments during mitosis. Isoform PLEC-1A is phosphorylated on Ser-21. Isoform PLEC-1A is phosphorylated on Tyr-26. In terms of tissue distribution, detected in eye lens fiber cells (at protein level). Expressed at high levels in lung, brain, small intestine, muscle, heart and skin with lower levels found in kidney, liver, uterus, spleen and salivary gland.

It localises to the cytoplasm. It is found in the cytoskeleton. The protein resides in the cell junction. The protein localises to the hemidesmosome. Its subcellular location is the cell projection. It localises to the podosome. Functionally, interlinks intermediate filaments with microtubules and microfilaments and anchors intermediate filaments to desmosomes or hemidesmosomes. May be involved not only in the cross-linking and stabilization of cytoskeletal intermediate filaments network, but also in the regulation of their dynamics. The chain is Plectin (Plec) from Mus musculus (Mouse).